Here is a 62-residue protein sequence, read N- to C-terminus: 6.7 kDa chloroplast outer envelope membrane protein (62 aa).

The Chloroplast intermembrane segment spans residues 1 to 17 (MESVAKPATTKEGSAKQ). A helical membrane pass occupies residues 18 to 40 (AAIVVGVLALGWFAIQVAFIPLF). Residues 41 to 62 (NKVRGGGSDKKDDDVNAFTPDT) lie on the Cytoplasmic side of the membrane.

Its subcellular location is the plastid. It localises to the chloroplast outer membrane. The sequence is that of 6.7 kDa chloroplast outer envelope membrane protein from Spinacia oleracea (Spinach).